We begin with the raw amino-acid sequence, 237 residues long: Ribosomal RNA small subunit methyltransferase G (237 aa).

S-adenosyl-L-methionine-binding positions include glycine 78, phenylalanine 83, 129 to 130 (AE), and arginine 148.

Belongs to the methyltransferase superfamily. RNA methyltransferase RsmG family.

It localises to the cytoplasm. Its function is as follows. Specifically methylates the N7 position of a guanine in 16S rRNA. In Streptococcus equi subsp. equi (strain 4047), this protein is Ribosomal RNA small subunit methyltransferase G.